We begin with the raw amino-acid sequence, 921 residues long: MEYKDTLLMPKTDFPMRGNLPNKEPEWQAKWEEEKLYEKIQEKNAGRKAYILHDGPPYANGELHMGHALNKTIKDIIVRYKSMAGFSSPYVPGWDTHGLPIETAIAKKGVKRKEMSIAEFRKLCAEYAMTQVDGQRTGFKRLGINGDWENPYITLLPEYEAEQIKVFGEMAKKGYIYKGKKPVYWSPSSESALAEAEIEYQDKKSASIFVAFKVTDGKGVLDEGTNIVIWTTTPWTIPANMGITVNPDLDYVVIESAGEKYVVAEALLPSLREKLGFEDATVVKTVRGSELDRVVTKHPFYDRDSLVMNGEHATAEAGTGAVHTAPGHGEDDFLIGKKYDLEVLAPLDDRGVFTEEAPGFEGVFYDTANKMVTEKLEEVGALLKMEFITHSYPHDWRTKKPVIFRATAQWFASIDAFRDDLLAAVKGVNWTPAWGETRLFNMVRDRGDWVISRQRAWGVPLPIFYAENGEAIITDETINHISELFREHGSNVWFERDVKDLLPAGFTHPGSPNGEFTKETDIMDVWFDSGSSHQAVLNARPELSRPADLYMEGSDQYRGWFNSSLTTAVAITGEAPYRNVLSHGFALDGEGRKMSKSLGNTLLPGKVIKQLGADIVRLWVASVDYQADVRVSDEILKQVSEVYRKIRNTMRFLLGNINDFNPTTNAVSYENLREVDKYMLIKLNDLVKNVKDNYEAFEFSTIYHQINNFCTVELSQFYMDFAKDVVYIEAADSHDRRAMQTVFYEAVVTLTKLLAPILPHTTEEVWNSLIGEGVESIHLQDLPEVKVLADSEEITAKWDAFMQIRDNVQKALEFARNEKLIGKSMLAKVTLYVDGEAKTLFDSLEGDFAQLFIVSDFELVEGLENAPESAFKSNQVAVQITVAEGETCERCRVVKKDVGVNPKHPTLCGRCADIVVKHYEA.

A 'HIGH' region motif is present at residues Pro-57–His-67. Glu-552 serves as a coordination point for L-isoleucyl-5'-AMP. Residues Lys-593 to Ser-597 carry the 'KMSKS' region motif. Lys-596 provides a ligand contact to ATP. Zn(2+)-binding residues include Cys-888, Cys-891, Cys-908, and Cys-911.

The protein belongs to the class-I aminoacyl-tRNA synthetase family. IleS type 1 subfamily. Monomer. It depends on Zn(2+) as a cofactor.

The protein resides in the cytoplasm. The enzyme catalyses tRNA(Ile) + L-isoleucine + ATP = L-isoleucyl-tRNA(Ile) + AMP + diphosphate. Catalyzes the attachment of isoleucine to tRNA(Ile). As IleRS can inadvertently accommodate and process structurally similar amino acids such as valine, to avoid such errors it has two additional distinct tRNA(Ile)-dependent editing activities. One activity is designated as 'pretransfer' editing and involves the hydrolysis of activated Val-AMP. The other activity is designated 'posttransfer' editing and involves deacylation of mischarged Val-tRNA(Ile). The protein is Isoleucine--tRNA ligase of Listeria monocytogenes serotype 4b (strain F2365).